Here is a 495-residue protein sequence, read N- to C-terminus: 2-carboxy-D-arabinitol-1-phosphatase (495 aa).

The span at 1-12 (MLLFAPTPPPSP) shows a compositional bias: pro residues. The tract at residues 1–23 (MLLFAPTPPPSPATAHRRPGGSA) is disordered. The transit peptide at 1–50 (MLLFAPTPPPSPATAHRRPGGSAASCIRCSSVRELDRSPSRPPLPPLAEA) directs the protein to the chloroplast. The active-site Tele-phosphohistidine intermediate is the histidine 58. Residue glutamate 132 is the Proton donor/acceptor of the active site.

It belongs to the phosphoglycerate mutase family.

The protein localises to the plastid. Its subcellular location is the chloroplast stroma. It carries out the reaction 2-carboxy-D-arabinitol 1-phosphate + H2O = 2-carboxy-D-arabinitol + phosphate. Its activity is regulated as follows. Inactivated by oxidized glutathione (GSSG) at pH 8.0. Phosphoglycerate mutase-like protein lacking PGM activity, but having 2-carboxy-D-arabinitol 1-phosphate (CA1P) phosphatase activity. Can dephosphorylate the closely related compounds 2-carboxy-D-arabinitol 1,5-bisphosphate (CABP) and 2-carboxy-D-ribitol-1,5-bisphosphate(CRBP), and 2,3-diphosphoglycerate. Prevents the accumulation of D-glycero-2,3-pentodiulose-1,5-bisphosphate (PDBP) a potent inhibitor of ribulose-1,5-bisphosphate carboxylase (RuBisCO). PDBP is produced during the oxidation of ribulose-1,5-bisphosphate, the substrate of RuBisCO. In Triticum aestivum (Wheat), this protein is 2-carboxy-D-arabinitol-1-phosphatase.